The chain runs to 68 residues: DNA-directed RNA polymerase subunit omega (68 aa).

This sequence belongs to the RNA polymerase subunit omega family. The RNAP catalytic core consists of 2 alpha, 1 beta, 1 beta' and 1 omega subunit. When a sigma factor is associated with the core the holoenzyme is formed, which can initiate transcription.

The catalysed reaction is RNA(n) + a ribonucleoside 5'-triphosphate = RNA(n+1) + diphosphate. Its function is as follows. Promotes RNA polymerase assembly. Latches the N- and C-terminal regions of the beta' subunit thereby facilitating its interaction with the beta and alpha subunits. The protein is DNA-directed RNA polymerase subunit omega of Neisseria gonorrhoeae (strain NCCP11945).